Here is a 155-residue protein sequence, read N- to C-terminus: Ribosomal RNA large subunit methyltransferase H (155 aa).

Residues Leu72, Gly103, and 122-127 each bind S-adenosyl-L-methionine; that span reads LSDLTL.

Belongs to the RNA methyltransferase RlmH family. Homodimer.

Its subcellular location is the cytoplasm. It carries out the reaction pseudouridine(1915) in 23S rRNA + S-adenosyl-L-methionine = N(3)-methylpseudouridine(1915) in 23S rRNA + S-adenosyl-L-homocysteine + H(+). Functionally, specifically methylates the pseudouridine at position 1915 (m3Psi1915) in 23S rRNA. The protein is Ribosomal RNA large subunit methyltransferase H of Acidovorax ebreus (strain TPSY) (Diaphorobacter sp. (strain TPSY)).